A 242-amino-acid polypeptide reads, in one-letter code: ATP synthase subunit a (242 aa).

The next 6 membrane-spanning stretches (helical) occupy residues 29–49, 83–103, 114–134, 140–160, 181–201, and 206–226; these read SAVA…IAFV, VFFP…IIGM, IIVT…YGIY, FFSL…MVII, VAGH…TWFF, and IALV…QAYI.

It belongs to the ATPase A chain family. In terms of assembly, F-type ATPases have 2 components, CF(1) - the catalytic core - and CF(0) - the membrane proton channel. CF(1) has five subunits: alpha(3), beta(3), gamma(1), delta(1), epsilon(1). CF(0) has three main subunits: a(1), b(2) and c(9-12). The alpha and beta chains form an alternating ring which encloses part of the gamma chain. CF(1) is attached to CF(0) by a central stalk formed by the gamma and epsilon chains, while a peripheral stalk is formed by the delta and b chains.

Its subcellular location is the cell inner membrane. Functionally, key component of the proton channel; it plays a direct role in the translocation of protons across the membrane. In Orientia tsutsugamushi (strain Boryong) (Rickettsia tsutsugamushi), this protein is ATP synthase subunit a.